Consider the following 104-residue polypeptide: Flagellar hook-basal body complex protein FliE (104 aa).

Belongs to the FliE family.

Its subcellular location is the bacterial flagellum basal body. The protein is Flagellar hook-basal body complex protein FliE of Edwardsiella ictaluri (strain 93-146).